The following is a 61-amino-acid chain: MTAWRAAGITYIQYSNIAARILRESLKTGLRADAAKRDASHVKFTPWANGKPAQRQTQSES.

The interval 3 to 15 (AWRAAGITYIQYS) is sufficient for mth activation.

Belongs to the eukaryotic ATPase epsilon family.

Its function is as follows. Activates the G-protein coupled receptor mth in vitro, leading to increased intracellular calcium ion levels. The sequence is that of Protein stunted from Drosophila melanogaster (Fruit fly).